Here is a 1148-residue protein sequence, read N- to C-terminus: MESLLLPVLLLLAILWTQAAALINLKYSVEEEQRAGTVIANVAKDAREAGFALDPRQASAFRVVSNSAPHLVDINPSSGLLVTKQKIDRDLLCRQSPKCIISLEVMSSSMEICVIKVEIKDLNDNAPSFPAAQIELEISEAASPGTRIPLDSAYDPDSGSFGVQTYELTPNELFGLEIKTRGDGSRFAELVVEKSLDRETQSHYSFRITALDGGDPPRLGTVGLSIKVTDSNDNNPVFSESTYAVSVPENSPPNTPVIRLNASDPDEGTNGQVVYSFYGYVNDRTRELFQIDPHSGLVTVTGALDYEEGHVYELDVQAKDLGPNSIPAHCKVTVSVLDTNDNPPVINLLSVNSELVEVSESAPPGYVIALVRVSDRDSGLNGRVQCRLLGNVPFRLQEYESFSTILVDGRLDREQHDQYNLTIQARDGGVPMLQSAKSFTVLITDENDNHPHFSKPYYQVIVQENNTPGAYLLSVSARDPDLGLNGSVSYQIVPSQVRDMPVFTYVSINPNSGDIYALRSFNHEQTKAFEFKVLAKDGGLPSLQSNATVRVIILDVNDNTPVITAPPLINGTAEVYIPRNSGIGYLVTVVKAEDYDEGENGRVTYDMTEGDRGFFEIDQVNGEVRTTRTFGESSKSSYELIVVAHDHGKTSLSASALVLIYLSPALDAQESMGSVNLSLIFIIALGSIAGILFVTMIFVAIKCKRDNKEIRTYNCSNCLTITCLLGCFIKGQNSKCLHCISVSPISEEQDKKTEEKVSLRGKRIAEYSYGHQKKSSKKKKISKNDIRLVPRDVEETDKMNVVSCSSLTSSLNYFDYHQQTLPLGCRRSESTFLNVENQNTRNTSANHIYHHSFNSQGPQQPDLIINGVPLPETENYSFDSNYVNSRAHLIKSSSTFKDLEGNSLKDSGHEESDQTDSEHDVQRSLYCDTAVNDVLNTSVTSMGSQMPDHDQNEGFHCREECRILGHSDRCWMPRNPMPIRSKSPEHVRNIIALSIEATAADVEAYDDCGPTKRTFATFGKDVSDHPAEERPTLKGKRTVDVTICSPKVNSVIREAGNGCEAISPVTSPLHLKSSLPTKPSVSYTIALAPPARDLEQYVNNVNNGPTRPSEAEPRGADSEKVMHEVSPILKEGRNKESPGVKRLKDIVL.

The N-terminal stretch at methionine 1–alanine 21 is a signal peptide. Cadherin domains follow at residues leucine 22–phenylalanine 129, proline 130–phenylalanine 238, serine 239–isoleucine 346, serine 350–phenylalanine 453, serine 454–isoleucine 563, and isoleucine 569–methionine 672. Topologically, residues leucine 22 to serine 678 are extracellular. Glutamate 31, glutamate 32, aspartate 88, and aspartate 90 together coordinate Ca(2+). A disulfide bridge connects residues cysteine 93 and cysteine 99. Residues aspartate 121, asparagine 123, aspartate 124, asparagine 125, glutamate 140, aspartate 155, aspartate 157, glutamate 199, aspartate 212, aspartate 230, serine 231, asparagine 232, aspartate 233, asparagine 234, and glutamate 249 each coordinate Ca(2+). The N-linked (GlcNAc...) asparagine glycan is linked to asparagine 261. Residues aspartate 264, aspartate 266, asparagine 270, aspartate 305, glutamate 307, aspartate 338, asparagine 340, aspartate 341, asparagine 342, glutamate 360, aspartate 375, aspartate 377, asparagine 381, aspartate 412, and glutamate 414 each contribute to the Ca(2+) site. Asparagine 420 carries N-linked (GlcNAc...) asparagine glycosylation. Residues aspartate 427, aspartate 445, glutamate 446, asparagine 447, aspartate 448, asparagine 449, glutamate 464, aspartate 479, aspartate 481, asparagine 485, asparagine 522, glutamate 524, and aspartate 537 each contribute to the Ca(2+) site. N-linked (GlcNAc...) asparagine glycosylation occurs at asparagine 485. Asparagine 546 is a glycosylation site (N-linked (GlcNAc...) asparagine). Aspartate 555, valine 556, asparagine 557, aspartate 558, and asparagine 559 together coordinate Ca(2+). An N-linked (GlcNAc...) asparagine glycan is attached at asparagine 570. 4 residues coordinate Ca(2+): aspartate 594, aspartate 596, asparagine 600, and aspartate 646. N-linked (GlcNAc...) asparagine glycosylation is present at asparagine 676. Residues leucine 679–valine 699 form a helical membrane-spanning segment. Residues alanine 700–leucine 1148 are Cytoplasmic-facing. Disordered stretches follow at residues glycine 901–valine 921 and asparagine 1100–leucine 1148. Basic and acidic residues-rich tracts occupy residues aspartate 906–valine 921, serine 1109–histidine 1123, and lysine 1130–leucine 1148.

As to quaternary structure, homodimer; antiparallel. Moderately expressed in all regions of the brain examined, with lowest levels found in the cerebellum. Moderate expression is also found in ovary, and low expression in all other tissues tested. Also detected in primary skin fibroblast.

It is found in the cell membrane. Functionally, calcium-dependent cell-adhesion protein. The protein is Protocadherin-19 (PCDH19) of Homo sapiens (Human).